Here is a 297-residue protein sequence, read N- to C-terminus: Putative 6-phosphogluconate dehydrogenase YqeC (297 aa).

NAD(+) contacts are provided by residues 7-12 (GLGKMG) and asparagine 94. Substrate is bound by residues asparagine 94 and 120–122 (SGG). The Proton acceptor role is filled by lysine 170. 173–174 (HN) provides a ligand contact to substrate. Glutamate 177 (proton donor) is an active-site residue. 2 residues coordinate substrate: tyrosine 178 and arginine 268.

The protein belongs to the 6-phosphogluconate dehydrogenase family.

Its function is as follows. May act as NAD-dependent 6-P-gluconate dehydrogenase. This chain is Putative 6-phosphogluconate dehydrogenase YqeC (yqeC), found in Bacillus subtilis (strain 168).